A 279-amino-acid polypeptide reads, in one-letter code: MKLMLEIVKNISEPVGKLAIWFNETYQVDVSETINKWNELTGMNITVQENAVSADDTTAEETEYSVVVNENPTRTAARTRKESKTAAKPRKMQIPKTKDVCQHIFKSGSRAGEQCTTKPKNNALFCSAHRVRNSVTSNATEASEKTVAKTNGTAAPQKRGVKSKSPTVIPSDFDDSDSSSSATRGLRKAPTLSPRKPPPTTTTASSAQEEEDEQQAHFSGSSSPPPKNNGNGAVYSDSSSDEDDDDAHHTTVIPLLKKGARKPLDENVQFTSDSSDEED.

The disordered stretch occupies residues 136–279; the sequence is TSNATEASEK…FTSDSSDEED (144 aa). Residues 228 to 238 are compositionally biased toward low complexity; sequence NNGNGAVYSDS.

This is an uncharacterized protein from Invertebrate iridescent virus 3 (IIV-3).